A 320-amino-acid polypeptide reads, in one-letter code: HPr kinase/phosphorylase (320 aa).

Active-site residues include H141 and K162. 156–163 contacts ATP; it reads GHSGLGKS. S163 is a Mg(2+) binding site. The active-site Proton acceptor; for phosphorylation activity. Proton donor; for dephosphorylation activity is the D180. An important for the catalytic mechanism of both phosphorylation and dephosphorylation region spans residues 204–213; it reads LEVRGLGILN. Position 205 (E205) interacts with Mg(2+). R248 is an active-site residue. The interval 269 to 274 is important for the catalytic mechanism of dephosphorylation; sequence PVAVGR.

Belongs to the HPrK/P family. In terms of assembly, homohexamer. Requires Mg(2+) as cofactor.

The catalysed reaction is [HPr protein]-L-serine + ATP = [HPr protein]-O-phospho-L-serine + ADP + H(+). The enzyme catalyses [HPr protein]-O-phospho-L-serine + phosphate + H(+) = [HPr protein]-L-serine + diphosphate. Its function is as follows. Catalyzes the ATP- as well as the pyrophosphate-dependent phosphorylation of a specific serine residue in HPr, a phosphocarrier protein of the phosphoenolpyruvate-dependent sugar phosphotransferase system (PTS). HprK/P also catalyzes the pyrophosphate-producing, inorganic phosphate-dependent dephosphorylation (phosphorolysis) of seryl-phosphorylated HPr (P-Ser-HPr). The protein is HPr kinase/phosphorylase of Neisseria gonorrhoeae (strain ATCC 700825 / FA 1090).